Reading from the N-terminus, the 330-residue chain is Peroxidase N1 (330 aa).

The N-terminal stretch at 1–29 (MEYYHHSINKMAMFMVILVLAIDVTMVLG) is a signal peptide. At Gln-30 the chain carries Pyrrolidone carboxylic acid. 4 cysteine pairs are disulfide-bonded: Cys-41–Cys-117, Cys-74–Cys-79, Cys-123–Cys-326, and Cys-201–Cys-233. His-72 (proton acceptor) is an active-site residue. Ca(2+) contacts are provided by Asp-73, Val-76, Gly-78, Asp-80, and Ser-82. Pro-164 provides a ligand contact to substrate. His-194 provides a ligand contact to heme b. Thr-195 provides a ligand contact to Ca(2+). An N-linked (GlcNAc...) asparagine glycan is attached at Asn-212. Ca(2+)-binding residues include Asp-246 and Asp-254.

It belongs to the peroxidase family. Classical plant (class III) peroxidase subfamily. It depends on Ca(2+) as a cofactor. The cofactor is heme b. In terms of tissue distribution, expressed at a high level in roots and at a trace level in lower leaves. Not expressed in upper leaves, stems, flowers, seeds and shoot apices.

Its subcellular location is the secreted. It carries out the reaction 2 a phenolic donor + H2O2 = 2 a phenolic radical donor + 2 H2O. Removal of H(2)O(2), oxidation of toxic reductants, biosynthesis and degradation of lignin, suberization, auxin catabolism, response to environmental stresses such as wounding, pathogen attack and oxidative stress. These functions might be dependent on each isozyme/isoform in each plant tissue. Can use NADH, NADPH and monolignols as substrates. The chain is Peroxidase N1 from Nicotiana tabacum (Common tobacco).